A 1147-amino-acid polypeptide reads, in one-letter code: Nitric oxide synthase, inducible (1147 aa).

Positions 22–51 are disordered; sequence KDINNNVEKTPGAIPSPTTQDDPKSHKHQN. Positions 23-27 match the DINNN-motif; mediates interaction with SPSB1, SPSB2 and SPSB4 motif; it reads DINNN. 2 residues coordinate Zn(2+): Cys-107 and Cys-112. Position 115 (Ser-115) interacts with (6R)-L-erythro-5,6,7,8-tetrahydrobiopterin. Cys-197 lines the heme b pocket. L-arginine is bound by residues Gln-260, Trp-369, Tyr-370, and Glu-374. Residues Arg-378, Ile-459, Trp-460, and Phe-473 each contribute to the (6R)-L-erythro-5,6,7,8-tetrahydrobiopterin site. Tyr-488 provides a ligand contact to heme b. The interval 512–532 is calmodulin-binding; the sequence is FTVLVKAVFFASVLMRKVMAS. Positions 536-674 constitute a Flavodoxin-like domain; that stretch reads ATVLFATETG…AFRSWAVQTF (139 aa). The FMN site is built by Thr-542, Glu-543, Thr-544, Lys-546, and Ser-547. Thr-564 is subject to Phosphothreonine. At Tyr-572 the chain carries Phosphotyrosine. FMN is bound by residues Ser-588, Thr-589, Ser-625, Cys-632, Glu-658, and Gln-662. Residues 727 to 967 enclose the FAD-binding FR-type domain; the sequence is KNVFTMRLKS…VRSVSGFQLP (241 aa). Arg-747 contacts NADP(+). 6 residues coordinate FAD: His-769, Arg-903, Tyr-905, Ser-906, Thr-921, and Ala-923. NADP(+) is bound at residue Thr-926. FAD is bound by residues Tyr-927, Val-940, Cys-941, and Ser-942. NADP(+) is bound by residues Thr-981, Arg-1014, Ser-1043, Arg-1044, Lys-1050, Tyr-1052, Gln-1054, and Asp-1087.

The protein belongs to the NOS family. As to quaternary structure, homodimer. Interacts with NHERF1. Interacts with GAPDH; induced by oxidatively-modified low-densitity lipoprotein (LDL(ox)). Interacts with S100A8 and S100A9 to form the iNOS-S100A8/9 transnitrosylase complex. Interacts with SPSB1, SPSB2 and SPSB4. Interacts with ELOC and CUL5 in the presence of SPSB1 or SPSB2 or SPSB4. Forms a complex with ASL, ASS1 and HSP90AA1; the complex regulates cell-autonomous L-arginine synthesis and citrulline recycling while channeling extracellular L-arginine to nitric oxide synthesis pathway. Requires heme b as cofactor. The cofactor is FAD. FMN is required as a cofactor. (6R)-L-erythro-5,6,7,8-tetrahydrobiopterin serves as cofactor. Post-translationally, polyubiquitinated; mediated by SPSB1, SPSB2 and SPSB4, leading to proteasomal degradation. As to expression, in normal kidney, expressed primarily in the medullary thick ascending limb, with minor amounts in the medullary collecting duct and vasa recta bundle.

It is found in the cytoplasm. The protein resides in the cytosol. It catalyses the reaction 2 L-arginine + 3 NADPH + 4 O2 + H(+) = 2 L-citrulline + 2 nitric oxide + 3 NADP(+) + 4 H2O. Its activity is regulated as follows. Not stimulated by calcium/calmodulin. Aspirin inhibits expression and function of this enzyme and effects may be exerted at the level of translational/post-translational modification and directly on the catalytic activity. In terms of biological role, produces nitric oxide (NO) which is a messenger molecule with diverse functions throughout the body. In macrophages, NO mediates tumoricidal and bactericidal actions. Also has nitrosylase activity and mediates cysteine S-nitrosylation of cytoplasmic target proteins such PTGS2/COX2. As component of the iNOS-S100A8/9 transnitrosylase complex involved in the selective inflammatory stimulus-dependent S-nitrosylation of GAPDH implicated in regulation of the GAIT complex activity and probably multiple targets including ANXA5, EZR, MSN and VIM. Involved in inflammation, enhances the synthesis of pro-inflammatory mediators such as IL6 and IL8. This is Nitric oxide synthase, inducible (Nos2) from Rattus norvegicus (Rat).